The primary structure comprises 506 residues: Vinckepain-1 (506 aa).

The Cytoplasmic portion of the chain corresponds to 1–32; the sequence is MSDNIGQINFTIPGIQSLDENDTYLKINHKKT. A propeptide spans 1 to 262 (activation peptide); the sequence is MSDNIGQINF…LISVDNKSKD (262 aa). A helical; Signal-anchor for type II membrane protein transmembrane segment spans residues 33 to 53; sequence IKICAYAITAIALFFIGGVFF. Topologically, residues 54–506 are lumenal; sequence KNQAKINALD…VGSDVFFPIY (453 aa). N133 and N258 each carry an N-linked (GlcNAc...) asparagine glycan. 4 disulfides stabilise this stretch: C284–C326, C319–C359, C344–C364, and C413–C495. C287 is an active-site residue. N418 is a glycosylation site (N-linked (GlcNAc...) asparagine). Residues H419 and N470 contribute to the active site.

It belongs to the peptidase C1 family.

The protein resides in the membrane. In terms of biological role, cysteine protease. This chain is Vinckepain-1, found in Plasmodium vinckei.